We begin with the raw amino-acid sequence, 66 residues long: Beta-toxin Ct71 (66 aa).

In terms of domain architecture, LCN-type CS-alpha/beta spans 1–66; that stretch reads KEGYIVNYHD…VWPLPKKTCN (66 aa). 4 disulfide bridges follow: Cys12–Cys65, Cys16–Cys41, Cys25–Cys46, and Cys29–Cys48. Asn66 is modified (asparagine amide).

The protein belongs to the long (4 C-C) scorpion toxin superfamily. Sodium channel inhibitor family. Beta subfamily. Expressed by the venom gland.

It localises to the secreted. Beta toxins bind voltage-independently at site-4 of sodium channels (Nav) and shift the voltage of activation toward more negative potentials thereby affecting sodium channel activation and promoting spontaneous and repetitive firing. Lethal to mice. This chain is Beta-toxin Ct71, found in Centruroides tecomanus (Scorpion).